The chain runs to 273 residues: MRHTLPIAPQFYVTAPQPCPYLAGRMERKLFTALQGEGAERLNNALSQQGFRRSQNVLYRPSCADCAACLSARIDVSAFRASRSQKRAMRRNAHLTRRATSPWATDEQYELFRRYLDSRHADGGMADMDVFEFAAMIEETPIRSRVIEYAHRDTRALIGVSLTDVLDDGLSMVYSFYDPDLHRDSLGTHMILDHIAIAREAGLPYVYLGYWVPGSPKMGYKSRFSGLEIYLGGRWQAMTDPEAHDAIRHPLSTDPIAEQVANIQLPDRWPTGD.

The protein belongs to the R-transferase family. Bpt subfamily.

It localises to the cytoplasm. It carries out the reaction N-terminal L-glutamyl-[protein] + L-leucyl-tRNA(Leu) = N-terminal L-leucyl-L-glutamyl-[protein] + tRNA(Leu) + H(+). The catalysed reaction is N-terminal L-aspartyl-[protein] + L-leucyl-tRNA(Leu) = N-terminal L-leucyl-L-aspartyl-[protein] + tRNA(Leu) + H(+). Functions in the N-end rule pathway of protein degradation where it conjugates Leu from its aminoacyl-tRNA to the N-termini of proteins containing an N-terminal aspartate or glutamate. This Ruegeria pomeroyi (strain ATCC 700808 / DSM 15171 / DSS-3) (Silicibacter pomeroyi) protein is Aspartate/glutamate leucyltransferase.